A 415-amino-acid polypeptide reads, in one-letter code: Squalene synthase 1 (415 aa).

Helical transmembrane passes span 281–301 (AIFRFCAIPQIMAIGTLALCF) and 391–411 (LIAIIFIILAILYAYLSSNLL).

The protein belongs to the phytoene/squalene synthase family. Mg(2+) serves as cofactor. The cofactor is Mn(2+). In terms of tissue distribution, mostly expressed in the shoot apex (buds) and roots, and, to a lower extent, in stems, leaves, flowers and seeds.

It is found in the endoplasmic reticulum membrane. The enzyme catalyses 2 (2E,6E)-farnesyl diphosphate + NADH + H(+) = squalene + 2 diphosphate + NAD(+). The catalysed reaction is 2 (2E,6E)-farnesyl diphosphate + NADPH + H(+) = squalene + 2 diphosphate + NADP(+). The protein operates within terpene metabolism; lanosterol biosynthesis; lanosterol from farnesyl diphosphate: step 1/3. In terms of biological role, component of the triterpene saponins (e.g. ginsenosides or panaxosides) and phytosterols biosynthetic pathways. Catalyzes the biosynthesis of squalene. This Panax ginseng (Korean ginseng) protein is Squalene synthase 1.